Reading from the N-terminus, the 48-residue chain is Large ribosomal subunit protein bL32 (48 aa).

The tract at residues 24–48 (LPMPIKDKDGSYKMPHRVNPVTKEY) is disordered.

The protein belongs to the bacterial ribosomal protein bL32 family.

The protein is Large ribosomal subunit protein bL32 of Campylobacter lari (strain RM2100 / D67 / ATCC BAA-1060).